The chain runs to 132 residues: Ribosome-binding factor A (132 aa).

The protein belongs to the RbfA family. As to quaternary structure, monomer. Binds 30S ribosomal subunits, but not 50S ribosomal subunits or 70S ribosomes.

It is found in the cytoplasm. Its function is as follows. One of several proteins that assist in the late maturation steps of the functional core of the 30S ribosomal subunit. Associates with free 30S ribosomal subunits (but not with 30S subunits that are part of 70S ribosomes or polysomes). Required for efficient processing of 16S rRNA. May interact with the 5'-terminal helix region of 16S rRNA. In Pseudomonas putida (strain GB-1), this protein is Ribosome-binding factor A.